Reading from the N-terminus, the 584-residue chain is MHLLPVITAVALIYTPLASAVPSSSNPQFPAALLTESNSAALPTQEWHSPRLWTRLRNSIIETIWRVPSQQRHPSRIKSPASSRKAPASIRARYGDDVVLRFTIQSQSDIQALVEASNILFLDIWASTDEWVDIRLAKDVVPSLLGLLPSSLKAASVPVIHDLAQAVYESYPQPSSSTPNPHRAFSPSIRLSSEAQNIFFQDYQPLSVMTPWMRLLASMFSTHVSLISLGTSYEGRDITAFRIGTHPMNPDNPFGQRKTIIITGGSHAREWISVSTVNYVAYSLITGYGKSKAITKLIEEFDWVLVPTMNPDGYVYTWETDRLWRKNRQENNLQFCPGVDLDRTWGFEWDGTDSRSNPCSEDFAGDGPFGGTEAQRISQWARNQTMNNNVTFIGFLDLHSYSQQILYPYSYSCNNIPPTLENLEELAIGISRAIRRTDNEHYDVSSACQGSVNSGKKKQGPALKRMESAGGSALDWFYHDLHVRYAYQLKLRDKGSYGFLLPRSNIIPTGKEVYNAVLEFGKFLLGKEAPSVDWDAEFQVSDPSRPISPDNEYHDRDVEHEALQQLDDEDGEADSHWVLRTQRS.

The first 20 residues, methionine 1–alanine 20, serve as a signal peptide directing secretion. A propeptide spanning residues valine 21–proline 174 is cleaved from the precursor. The 323-residue stretch at aspartate 202–leucine 524 folds into the Peptidase M14 domain. The Zn(2+) site is built by histidine 267 and glutamate 270. Substrate is bound by residues histidine 267–glutamate 270, arginine 325, and aspartate 342–arginine 343. Residues cysteine 336 and cysteine 359 are joined by a disulfide bond. 2 N-linked (GlcNAc...) asparagine glycosylation sites follow: asparagine 383 and asparagine 389. Histidine 399 contributes to the Zn(2+) binding site. Serine 400–tyrosine 401 is a substrate binding site. Residues glutamine 564–serine 584 are disordered.

Belongs to the peptidase M14 family. Zn(2+) is required as a cofactor.

It localises to the vacuole. The protein resides in the secreted. Its function is as follows. Inactive carboxypeptidase that may play a role in cell wall organization and biogenesis. The sequence is that of Inactive metallocarboxypeptidase ECM14 (ECM14) from Uncinocarpus reesii (strain UAMH 1704).